The following is a 209-amino-acid chain: Uracil phosphoribosyltransferase (209 aa).

Residues arginine 79, arginine 104, and 131 to 139 (DPMLATGAS) contribute to the 5-phospho-alpha-D-ribose 1-diphosphate site. Residues isoleucine 194 and 199-201 (GDA) each bind uracil. A 5-phospho-alpha-D-ribose 1-diphosphate-binding site is contributed by aspartate 200.

It belongs to the UPRTase family. Requires Mg(2+) as cofactor.

It catalyses the reaction UMP + diphosphate = 5-phospho-alpha-D-ribose 1-diphosphate + uracil. It participates in pyrimidine metabolism; UMP biosynthesis via salvage pathway; UMP from uracil: step 1/1. With respect to regulation, allosterically activated by GTP. In terms of biological role, catalyzes the conversion of uracil and 5-phospho-alpha-D-ribose 1-diphosphate (PRPP) to UMP and diphosphate. The chain is Uracil phosphoribosyltransferase from Staphylococcus aureus (strain JH1).